Consider the following 101-residue polypeptide: Carboxysome shell vertex protein CcmL (101 aa).

A BMV domain is found at 1–84 (MQIAKVRGTV…VDAAVVAIID (84 aa)).

This sequence belongs to the CcmL/EutN family. CcmL subfamily. Homopentamer. Interacts with full-length CcmM.

It localises to the carboxysome. Probably forms vertices in the carboxysome, a polyhedral inclusion where RuBisCO (ribulose bisphosphate carboxylase, rbcL-rbcS) is sequestered. Has been modeled to induce curvature upon insertion into an otherwise flat hexagonal molecular layer of CcmK subunits. The sequence is that of Carboxysome shell vertex protein CcmL from Nostoc sp. (strain PCC 7120 / SAG 25.82 / UTEX 2576).